The sequence spans 312 residues: Expansin-A24 (312 aa).

The signal sequence occupies residues 1–27; it reads MELLKRKLYAKILMMVMVIWIAPMTNG. Residues 31–86 form a disordered region; that stretch reads ASHVPGGRPGAHPSHGAHPAHGAHPSHGAHPSHGAHPSHGAHPSHGALPSHGGQVP. Positions 40 to 77 are enriched in low complexity; it reads GAHPSHGAHPAHGAHPSHGAHPSHGAHPSHGAHPSHGA. A run of 6 repeats spans residues 42-47, 48-53, 54-59, 60-65, 66-71, and 72-77. Residues 42–77 form a 6 X 6 AA tandem repeats of H-P-S-H-G-A region; sequence HPSHGAHPAHGAHPSHGAHPSHGAHPSHGAHPSHGA. The region spanning 108-218 is the Expansin-like EG45 domain; the sequence is QGACGYGDLH…RRVPCAKIGG (111 aa). Residues 228–307 enclose the Expansin-like CBD domain; sequence HFLMILPYNV…DWKCNGQSFD (80 aa).

Belongs to the expansin family. Expansin A subfamily.

The protein localises to the secreted. It is found in the cell wall. It localises to the membrane. Causes loosening and extension of plant cell walls by disrupting non-covalent bonding between cellulose microfibrils and matrix glucans. No enzymatic activity has been found. The protein is Expansin-A24 (EXPA24) of Arabidopsis thaliana (Mouse-ear cress).